The chain runs to 396 residues: uncharacterized protein (396 aa).

Lys219 carries the N6-(pyridoxal phosphate)lysine modification.

It belongs to the class-V pyridoxal-phosphate-dependent aminotransferase family. Pyridoxal 5'-phosphate is required as a cofactor.

It is found in the cytoplasm. It localises to the nucleus. This is an uncharacterized protein from Schizosaccharomyces pombe (strain 972 / ATCC 24843) (Fission yeast).